Reading from the N-terminus, the 1075-residue chain is Protein EXPORTIN 1A (1075 aa).

Positions 37–103 (ADQILRDLQA…KNYISEVIVQ (67 aa)) constitute an Importin N-terminal domain. HEAT repeat units follow at residues 91 to 130 (DGMK…QIVK), 135 to 171 (AKWT…EVFD), 232 to 267 (IFES…LNFG), 336 to 373 (SLLL…ELFD), 388 to 425 (MGLQ…LMIN), 474 to 513 (DTEK…SMAE), 563 to 600 (KFLK…KCKR), 612 to 649 (PFVS…AESD), 682 to 719 (LKDQ…IFLD), 756 to 793 (RETL…DYAR), 798 to 835 (ARES…CTLE), and 894 to 934 (ETGL…VLTD).

It belongs to the exportin family. Interacts with RAN1. In terms of tissue distribution, expressed ubiquitously, with higher levels in stems, inflorescences and roots. Present in mature pollen grains, unpollinated pistils, and 2-week-old seedlings.

It localises to the nucleus. Its subcellular location is the nuclear pore complex. The protein resides in the nucleus membrane. Receptor for the leucine-rich nuclear export signal (NES). Binds cooperatively to the NES on its target protein and to the small GTPase Ran in its active GTP-bound form. Required for the maternal-to-embryonic transition and during gametophyte development. Involved in heat-induced oxidative stress basal resistance. This chain is Protein EXPORTIN 1A, found in Arabidopsis thaliana (Mouse-ear cress).